The primary structure comprises 660 residues: Interferon-induced GTP-binding protein Mx1 (660 aa).

Met1 is subject to N-acetylmethionine. Over residues 1–10 (MVHSEAKMTR) the composition is skewed to basic and acidic residues. Residues 1-29 (MVHSEAKMTRPDSASASKQQLLNGNADIQ) are disordered. Positions 12 to 29 (DSASASKQQLLNGNADIQ) are enriched in polar residues. Residues 67–340 (DLALPAIAVI…LITHISKSLP (274 aa)) enclose the Dynamin-type G domain. The interval 77–84 (GDQSSGKS) is G1 motif. 77-84 (GDQSSGKS) is a GTP binding site. The G2 motif stretch occupies residues 102 to 104 (VTR). The tract at residues 178–181 (DLPG) is G3 motif. GTP contacts are provided by residues 178 to 182 (DLPGI) and 247 to 250 (TKPD). Residues 247–250 (TKPD) form a G4 motif region. Residues 279-282 (KCRG) form a G5 motif region. The segment at 341–366 (LLENQIKESYQNLSDELQKYGTDIPE) is bundle signaling element (BSE). The middle domain stretch occupies residues 366-533 (EDETEKTFFL…HFQMEKIVYC (168 aa)). The interval 367–630 (DETEKTFFLI…RDTYDWLLKE (264 aa)) is stalk. The interval 554–557 (KKKK) is critical for lipid-binding. Residues 572-660 (MAEILEHLNA…ARRRLAKFPG (89 aa)) enclose the GED domain.

This sequence belongs to the TRAFAC class dynamin-like GTPase superfamily. Dynamin/Fzo/YdjA family. In terms of assembly, homooligomer. Oligomerizes into multimeric filamentous or ring-like structures by virtue of its stalk domain. Oligomerization is critical for GTPase activity, protein stability, and recognition of viral target structures. Interacts with TRPC1, TRPC3, TRPC4, TRPC5, TRPC6 and TRPC7. Interacts with HSPA5. Interacts with TUBB/TUBB5. Interacts with DDX39A and DDX39B. In terms of processing, ISGylated.

It is found in the cytoplasm. It localises to the endoplasmic reticulum membrane. The protein resides in the perinuclear region. Functionally, interferon-induced dynamin-like GTPase with antiviral activity. The sequence is that of Interferon-induced GTP-binding protein Mx1 (MX1) from Equus caballus (Horse).